A 112-amino-acid polypeptide reads, in one-letter code: Transmembrane protein 14 homolog (112 aa).

A run of 4 helical transmembrane segments spans residues 9–26 (FKLNAAMAAIVLSGGVIG), 36–53 (LIAGSVFGLLYSTSAYYL), 60–77 (VGLGVSVLASSLLGGVMG), and 87–109 (IPIILATGSAFTLLSSGKELYNI).

The protein belongs to the TMEM14 family.

The protein resides in the membrane. This is Transmembrane protein 14 homolog from Dictyostelium discoideum (Social amoeba).